The primary structure comprises 274 residues: Ribosomal RNA small subunit methyltransferase A (274 aa).

Residues His15, Leu17, Gly42, Glu64, Asp89, and Asn109 each coordinate S-adenosyl-L-methionine.

Belongs to the class I-like SAM-binding methyltransferase superfamily. rRNA adenine N(6)-methyltransferase family. RsmA subfamily.

It localises to the cytoplasm. It carries out the reaction adenosine(1518)/adenosine(1519) in 16S rRNA + 4 S-adenosyl-L-methionine = N(6)-dimethyladenosine(1518)/N(6)-dimethyladenosine(1519) in 16S rRNA + 4 S-adenosyl-L-homocysteine + 4 H(+). Its function is as follows. Specifically dimethylates two adjacent adenosines (A1518 and A1519) in the loop of a conserved hairpin near the 3'-end of 16S rRNA in the 30S particle. May play a critical role in biogenesis of 30S subunits. This chain is Ribosomal RNA small subunit methyltransferase A, found in Synechococcus sp. (strain CC9605).